The primary structure comprises 314 residues: Methionyl-tRNA formyltransferase (314 aa).

A (6S)-5,6,7,8-tetrahydrofolate-binding site is contributed by Ser-111 to Pro-114.

This sequence belongs to the Fmt family.

The catalysed reaction is L-methionyl-tRNA(fMet) + (6R)-10-formyltetrahydrofolate = N-formyl-L-methionyl-tRNA(fMet) + (6S)-5,6,7,8-tetrahydrofolate + H(+). In terms of biological role, attaches a formyl group to the free amino group of methionyl-tRNA(fMet). The formyl group appears to play a dual role in the initiator identity of N-formylmethionyl-tRNA by promoting its recognition by IF2 and preventing the misappropriation of this tRNA by the elongation apparatus. The sequence is that of Methionyl-tRNA formyltransferase from Nitrobacter winogradskyi (strain ATCC 25391 / DSM 10237 / CIP 104748 / NCIMB 11846 / Nb-255).